The sequence spans 267 residues: MSIPTPYEDLLRDVLANGTHKSDRTGTGTLSVFGRQMRFDLSQSFPLITTKRVHFKSVAVELLWFLRGETNVKWMQDQGVTIWNEWADADGELGPVYGVQWRSWPTPDGGHIDQIAELVENLKSNPDSRRHIVSAWNVAELQDMALPPCHAFFQFYVADGKLSCQLYQRSADTFLGVPFNIASYALLTCMLAQQVGLEPGEFVWTGGDVHIYDNHMDQVLKQLKREPYEYPQLKILRKPDSIFDYTLDDFEVVGYQHHPTIKAPIAV.

DUMP is bound at residue arginine 24. Histidine 54 contacts (6R)-5,10-methylene-5,6,7,8-tetrahydrofolate. 129 to 130 lines the dUMP pocket; the sequence is RR. The active-site Nucleophile is the cysteine 149. DUMP-binding positions include 169 to 172, asparagine 180, and 210 to 212; these read RSAD and HIY. Aspartate 172 is a (6R)-5,10-methylene-5,6,7,8-tetrahydrofolate binding site. Residue alanine 266 coordinates (6R)-5,10-methylene-5,6,7,8-tetrahydrofolate.

Belongs to the thymidylate synthase family. Bacterial-type ThyA subfamily. As to quaternary structure, homodimer.

It localises to the cytoplasm. It catalyses the reaction dUMP + (6R)-5,10-methylene-5,6,7,8-tetrahydrofolate = 7,8-dihydrofolate + dTMP. It participates in pyrimidine metabolism; dTTP biosynthesis. Its function is as follows. Catalyzes the reductive methylation of 2'-deoxyuridine-5'-monophosphate (dUMP) to 2'-deoxythymidine-5'-monophosphate (dTMP) while utilizing 5,10-methylenetetrahydrofolate (mTHF) as the methyl donor and reductant in the reaction, yielding dihydrofolate (DHF) as a by-product. This enzymatic reaction provides an intracellular de novo source of dTMP, an essential precursor for DNA biosynthesis. This is Thymidylate synthase from Arthrobacter sp. (strain FB24).